The sequence spans 688 residues: Glycine--tRNA ligase beta subunit (688 aa).

Belongs to the class-II aminoacyl-tRNA synthetase family. In terms of assembly, tetramer of two alpha and two beta subunits.

The protein resides in the cytoplasm. It carries out the reaction tRNA(Gly) + glycine + ATP = glycyl-tRNA(Gly) + AMP + diphosphate. The sequence is that of Glycine--tRNA ligase beta subunit from Listeria monocytogenes serotype 4b (strain CLIP80459).